The chain runs to 304 residues: GTPase Era (304 aa).

The Era-type G domain occupies 11–179 (YCGFIAIVGR…QKIVRKSLRE (169 aa)). The G1 stretch occupies residues 19–26 (GRPNVGKS). 19–26 (GRPNVGKS) serves as a coordination point for GTP. Positions 45-49 (QTTRH) are G2. The segment at 66–69 (DTPG) is G3. GTP contacts are provided by residues 66–70 (DTPGL) and 128–131 (NKVD). Residues 128–131 (NKVD) are G4. The interval 158 to 160 (ISA) is G5. One can recognise a KH type-2 domain in the interval 210–287 (TGEELPYSVT…HLELWVKVKA (78 aa)).

It belongs to the TRAFAC class TrmE-Era-EngA-EngB-Septin-like GTPase superfamily. Era GTPase family. In terms of assembly, monomer.

It is found in the cytoplasm. The protein resides in the cell inner membrane. Functionally, an essential GTPase that binds both GDP and GTP, with rapid nucleotide exchange. Plays a role in 16S rRNA processing and 30S ribosomal subunit biogenesis and possibly also in cell cycle regulation and energy metabolism. In Actinobacillus pleuropneumoniae serotype 5b (strain L20), this protein is GTPase Era.